The primary structure comprises 413 residues: Multidrug resistance protein MdtA (413 aa).

The first 20 residues, 1–20, serve as a signal peptide directing secretion; the sequence is MKGSNTFRWAIAIGVVVAAA. 2 disordered regions span residues 31–57 and 391–413; these read SPTA…RDGP and EPQT…GARA. The segment covering 397–413 has biased composition (basic and acidic residues); it reads ADEKSPSRHEGQKGARA.

The protein belongs to the membrane fusion protein (MFP) (TC 8.A.1) family. Part of a tripartite efflux system composed of MdtA, MdtB and MdtC.

It is found in the cell inner membrane. In Salmonella paratyphi C (strain RKS4594), this protein is Multidrug resistance protein MdtA.